We begin with the raw amino-acid sequence, 294 residues long: 4-diphosphocytidyl-2-C-methyl-D-erythritol kinase (294 aa).

The active site involves lysine 16. Residue 99 to 109 participates in ATP binding; that stretch reads PMGAGLGGGSS. Residue aspartate 141 is part of the active site.

It belongs to the GHMP kinase family. IspE subfamily.

It carries out the reaction 4-CDP-2-C-methyl-D-erythritol + ATP = 4-CDP-2-C-methyl-D-erythritol 2-phosphate + ADP + H(+). It participates in isoprenoid biosynthesis; isopentenyl diphosphate biosynthesis via DXP pathway; isopentenyl diphosphate from 1-deoxy-D-xylulose 5-phosphate: step 3/6. Functionally, catalyzes the phosphorylation of the position 2 hydroxy group of 4-diphosphocytidyl-2C-methyl-D-erythritol. This is 4-diphosphocytidyl-2-C-methyl-D-erythritol kinase from Polynucleobacter asymbioticus (strain DSM 18221 / CIP 109841 / QLW-P1DMWA-1) (Polynucleobacter necessarius subsp. asymbioticus).